Consider the following 307-residue polypeptide: Cysteine synthase (307 aa).

Position 42 is an N6-(pyridoxal phosphate)lysine (Lys42). Pyridoxal 5'-phosphate contacts are provided by residues Asn72, 176–180 (GTGGH), and Ser263.

The protein belongs to the cysteine synthase/cystathionine beta-synthase family. Pyridoxal 5'-phosphate serves as cofactor.

The catalysed reaction is O-acetyl-L-serine + hydrogen sulfide = L-cysteine + acetate. Its pathway is amino-acid biosynthesis; L-cysteine biosynthesis; L-cysteine from L-serine: step 2/2. In Flavobacterium sp. (strain K3-15 / DSM ID92-509), this protein is Cysteine synthase (cysK).